The sequence spans 418 residues: Glutamyl-tRNA reductase (418 aa).

Substrate-binding positions include 49-52, serine 109, 114-116, and glutamine 120; these read TCNR and EPQ. Cysteine 50 (nucleophile) is an active-site residue. Residue 189-194 coordinates NADP(+); sequence GAGETI.

It belongs to the glutamyl-tRNA reductase family. Homodimer.

The catalysed reaction is (S)-4-amino-5-oxopentanoate + tRNA(Glu) + NADP(+) = L-glutamyl-tRNA(Glu) + NADPH + H(+). The protein operates within porphyrin-containing compound metabolism; protoporphyrin-IX biosynthesis; 5-aminolevulinate from L-glutamyl-tRNA(Glu): step 1/2. In terms of biological role, catalyzes the NADPH-dependent reduction of glutamyl-tRNA(Glu) to glutamate 1-semialdehyde (GSA). This Shigella flexneri protein is Glutamyl-tRNA reductase.